The sequence spans 393 residues: NAD(P)H-quinone oxidoreductase subunit H, chloroplastic (393 aa).

The protein belongs to the complex I 49 kDa subunit family. NDH is composed of at least 16 different subunits, 5 of which are encoded in the nucleus.

It is found in the plastid. It localises to the chloroplast thylakoid membrane. It carries out the reaction a plastoquinone + NADH + (n+1) H(+)(in) = a plastoquinol + NAD(+) + n H(+)(out). The enzyme catalyses a plastoquinone + NADPH + (n+1) H(+)(in) = a plastoquinol + NADP(+) + n H(+)(out). Its function is as follows. NDH shuttles electrons from NAD(P)H:plastoquinone, via FMN and iron-sulfur (Fe-S) centers, to quinones in the photosynthetic chain and possibly in a chloroplast respiratory chain. The immediate electron acceptor for the enzyme in this species is believed to be plastoquinone. Couples the redox reaction to proton translocation, and thus conserves the redox energy in a proton gradient. This chain is NAD(P)H-quinone oxidoreductase subunit H, chloroplastic, found in Manihot esculenta (Cassava).